Here is a 364-residue protein sequence, read N- to C-terminus: Phosrestin-2 (364 aa).

The protein belongs to the arrestin family. In terms of processing, phosphorylated, but does not undergo light-induced phosphorylation. As to expression, expressed specifically and abundantly in photoreceptor cells in retina and ocelli.

Its subcellular location is the cell projection. The protein localises to the rhabdomere. Regulates photoreceptor cell deactivation. Arr1 and Arr2 proteins are mediators of rhodopsin inactivation and are essential for the termination of the phototransduction cascade. Involved in regulating normal cycles of per nuclear accumulation in brain circadian neurons and thus is important for normal circadian behavior. In the dark, functions with Arr2 to promote the formation of cytosolic Bdbt foci, which are required for dco localization to photoreceptor nuclei where it phosphorylates and activates degradation of per. The protein is Phosrestin-2 (Arr1) of Drosophila melanogaster (Fruit fly).